Consider the following 507-residue polypeptide: Maturase K (507 aa).

Belongs to the intron maturase 2 family. MatK subfamily.

The protein resides in the plastid. It localises to the chloroplast. Its function is as follows. Usually encoded in the trnK tRNA gene intron. Probably assists in splicing its own and other chloroplast group II introns. In Kalmia procumbens (Alpine azalea), this protein is Maturase K.